A 185-amino-acid polypeptide reads, in one-letter code: uncharacterized protein (185 aa).

Residues 17–137 (GKSSIMNALF…QKPIIVVINK (121 aa)) form the G domain.

This is an uncharacterized protein from Methanocaldococcus jannaschii (strain ATCC 43067 / DSM 2661 / JAL-1 / JCM 10045 / NBRC 100440) (Methanococcus jannaschii).